Here is a 239-residue protein sequence, read N- to C-terminus: Large ribosomal subunit protein uL2 (239 aa).

Positions 200–239 (VNHPHGGKEHHIGRPSTVSRRAPPGRKVGHIAARRTGRRK) are disordered. The span at 222-239 (PPGRKVGHIAARRTGRRK) shows a compositional bias: basic residues.

The protein belongs to the universal ribosomal protein uL2 family. As to quaternary structure, part of the 50S ribosomal subunit. Forms a bridge to the 30S subunit in the 70S ribosome.

In terms of biological role, one of the primary rRNA binding proteins. Required for association of the 30S and 50S subunits to form the 70S ribosome, for tRNA binding and peptide bond formation. It has been suggested to have peptidyltransferase activity; this is somewhat controversial. Makes several contacts with the 16S rRNA in the 70S ribosome. This is Large ribosomal subunit protein uL2 from Thermococcus kodakarensis (strain ATCC BAA-918 / JCM 12380 / KOD1) (Pyrococcus kodakaraensis (strain KOD1)).